We begin with the raw amino-acid sequence, 471 residues long: ATP synthase subunit beta 1 (471 aa).

157 to 164 (GGAGVGKT) contributes to the ATP binding site.

The protein belongs to the ATPase alpha/beta chains family. As to quaternary structure, F-type ATPases have 2 components, CF(1) - the catalytic core - and CF(0) - the membrane proton channel. CF(1) has five subunits: alpha(3), beta(3), gamma(1), delta(1), epsilon(1). CF(0) has three main subunits: a(1), b(2) and c(9-12). The alpha and beta chains form an alternating ring which encloses part of the gamma chain. CF(1) is attached to CF(0) by a central stalk formed by the gamma and epsilon chains, while a peripheral stalk is formed by the delta and b chains.

Its subcellular location is the cell inner membrane. The catalysed reaction is ATP + H2O + 4 H(+)(in) = ADP + phosphate + 5 H(+)(out). Its function is as follows. Produces ATP from ADP in the presence of a proton gradient across the membrane. The catalytic sites are hosted primarily by the beta subunits. This is ATP synthase subunit beta 1 from Pelobacter propionicus (strain DSM 2379 / NBRC 103807 / OttBd1).